An 850-amino-acid chain; its full sequence is Pro-neuregulin-2, membrane-bound isoform (850 aa).

Positions 1 to 96 (MRQVCCSALP…AAAAGGMRRD (96 aa)) are disordered. The propeptide occupies 1–111 (MRQVCCSALP…SMLLFGVSLA (111 aa)). Residues 20–59 (SSYSDSSSSSSERSSSSSSSSSESGSSSRSSSNNSSISRP) are compositionally biased toward low complexity. Residues N52 and N53 are each glycosylated (N-linked (GlcNAc...) asparagine). Residues 60-74 (AAPPEPRPQQQPQPR) show a composition bias toward pro residues. Residues 75–92 (SPAARRAAARSRAAAAGG) show a composition bias toward low complexity. Over 112-405 (CYSPSLKSVQ…QKAEELYQKR (294 aa)) the chain is Extracellular. N147, N278, and N346 each carry an N-linked (GlcNAc...) asparagine glycan. The Ig-like C2-type domain maps to 237-332 (PKLKKMKSQT…RGRLYVNSVS (96 aa)). 4 disulfides stabilise this stretch: C257–C311, C345–C359, C353–C370, and C372–C381. Residues 341–382 (HARKCNETAKSYCVNGGVCYYIEGINQLSCKCPNGFFGQRCL) form the EGF-like domain. Residues 406 to 426 (VLTITGICVALLVVGIVCVVA) traverse the membrane as a helical segment. Residues 427–850 (YCKTKKQRKQ…PRAKQDSAPL (424 aa)) lie on the Cytoplasmic side of the membrane. 5 disordered regions span residues 492–535 (TFSG…DSQS), 566–585 (EERR…SLRD), 647–681 (LLRH…YYPA), 700–788 (LPAS…DGAL), and 801–850 (AHDA…SAPL). A compositionally biased stretch (low complexity) spans 494–506 (SGSHSCSPSHHCS). Positions 514–527 (HRHESHTWSLERSE) are enriched in basic and acidic residues. Residues 651–665 (PAPPGPGPGPGPGPG) show a composition bias toward pro residues. Low complexity predominate over residues 750 to 767 (GLAAQRARAARDSLSLSS).

It belongs to the neuregulin family. In terms of assembly, interacts with ERBB3 and ERBB4. Proteolytic cleavage close to the plasma membrane on the external face leads to the release of the soluble growth factor form. In terms of processing, extensive glycosylation precedes the proteolytic cleavage. In terms of tissue distribution, restricted to the cerebellum in the adult.

The protein resides in the cell membrane. It localises to the secreted. In terms of biological role, direct ligand for ERBB3 and ERBB4 tyrosine kinase receptors. Concomitantly recruits ERBB1 and ERBB2 coreceptors, resulting in ligand-stimulated tyrosine phosphorylation and activation of the ERBB receptors. May also promote the heterodimerization with the EGF receptor. This chain is Pro-neuregulin-2, membrane-bound isoform (NRG2), found in Homo sapiens (Human).